The sequence spans 180 residues: Outer membrane protein YfaZ (180 aa).

Positions 1-21 are cleaved as a signal peptide; sequence MKKIALAGLAGMLLVSASVNA.

Its subcellular location is the cell outer membrane. This chain is Outer membrane protein YfaZ (yfaZ), found in Escherichia coli (strain K12).